We begin with the raw amino-acid sequence, 235 residues long: 2,3-bisphosphoglycerate-dependent phosphoglycerate mutase 1 (235 aa).

Residues 8 to 15 (RHGESVAN), 21 to 22 (TG), R60, 87 to 90 (ERHY), K98, and 114 to 115 (RR) each bind substrate. Residue H9 is the Tele-phosphohistidine intermediate of the active site. Catalysis depends on E87, which acts as the Proton donor/acceptor.

This sequence belongs to the phosphoglycerate mutase family. BPG-dependent PGAM subfamily.

The enzyme catalyses (2R)-2-phosphoglycerate = (2R)-3-phosphoglycerate. The protein operates within carbohydrate degradation; glycolysis; pyruvate from D-glyceraldehyde 3-phosphate: step 3/5. Its function is as follows. Catalyzes the interconversion of 2-phosphoglycerate and 3-phosphoglycerate. This Latilactobacillus sakei subsp. sakei (strain 23K) (Lactobacillus sakei subsp. sakei) protein is 2,3-bisphosphoglycerate-dependent phosphoglycerate mutase 1.